A 466-amino-acid polypeptide reads, in one-letter code: Sulfate adenylyltransferase subunit 1 (466 aa).

The tr-type G domain maps to lysine 22–glutamate 237. The G1 stretch occupies residues glycine 31–serine 38. Glycine 31 to serine 38 contributes to the GTP binding site. The segment at glycine 89 to aspartate 93 is G2. Positions aspartate 110–glycine 113 are G3. GTP is bound by residues aspartate 110–histidine 114 and asparagine 165–aspartate 168. The segment at asparagine 165 to aspartate 168 is G4. Residues serine 202 to leucine 204 form a G5 region.

It belongs to the TRAFAC class translation factor GTPase superfamily. Classic translation factor GTPase family. CysN/NodQ subfamily. Heterodimer composed of CysD, the smaller subunit, and CysN.

The catalysed reaction is sulfate + ATP + H(+) = adenosine 5'-phosphosulfate + diphosphate. The protein operates within sulfur metabolism; hydrogen sulfide biosynthesis; sulfite from sulfate: step 1/3. In terms of biological role, with CysD forms the ATP sulfurylase (ATPS) that catalyzes the adenylation of sulfate producing adenosine 5'-phosphosulfate (APS) and diphosphate, the first enzymatic step in sulfur assimilation pathway. APS synthesis involves the formation of a high-energy phosphoric-sulfuric acid anhydride bond driven by GTP hydrolysis by CysN coupled to ATP hydrolysis by CysD. This is Sulfate adenylyltransferase subunit 1 from Colwellia psychrerythraea (strain 34H / ATCC BAA-681) (Vibrio psychroerythus).